The following is a 230-amino-acid chain: Large ribosomal subunit protein uL1 (230 aa).

It belongs to the universal ribosomal protein uL1 family. Part of the 50S ribosomal subunit.

Its function is as follows. Binds directly to 23S rRNA. The L1 stalk is quite mobile in the ribosome, and is involved in E site tRNA release. Protein L1 is also a translational repressor protein, it controls the translation of the L11 operon by binding to its mRNA. This Staphylococcus aureus (strain Mu3 / ATCC 700698) protein is Large ribosomal subunit protein uL1.